The following is a 426-amino-acid chain: Gamma-glutamyl phosphate reductase (426 aa).

This sequence belongs to the gamma-glutamyl phosphate reductase family.

Its subcellular location is the cytoplasm. The enzyme catalyses L-glutamate 5-semialdehyde + phosphate + NADP(+) = L-glutamyl 5-phosphate + NADPH + H(+). Its pathway is amino-acid biosynthesis; L-proline biosynthesis; L-glutamate 5-semialdehyde from L-glutamate: step 2/2. Catalyzes the NADPH-dependent reduction of L-glutamate 5-phosphate into L-glutamate 5-semialdehyde and phosphate. The product spontaneously undergoes cyclization to form 1-pyrroline-5-carboxylate. This chain is Gamma-glutamyl phosphate reductase, found in Nitrobacter winogradskyi (strain ATCC 25391 / DSM 10237 / CIP 104748 / NCIMB 11846 / Nb-255).